The primary structure comprises 175 residues: ATP synthase subunit delta (175 aa).

The protein belongs to the ATPase delta chain family. F-type ATPases have 2 components, F(1) - the catalytic core - and F(0) - the membrane proton channel. F(1) has five subunits: alpha(3), beta(3), gamma(1), delta(1), epsilon(1). F(0) has three main subunits: a(1), b(2) and c(10-14). The alpha and beta chains form an alternating ring which encloses part of the gamma chain. F(1) is attached to F(0) by a central stalk formed by the gamma and epsilon chains, while a peripheral stalk is formed by the delta and b chains.

The protein resides in the cell membrane. Functionally, f(1)F(0) ATP synthase produces ATP from ADP in the presence of a proton or sodium gradient. F-type ATPases consist of two structural domains, F(1) containing the extramembraneous catalytic core and F(0) containing the membrane proton channel, linked together by a central stalk and a peripheral stalk. During catalysis, ATP synthesis in the catalytic domain of F(1) is coupled via a rotary mechanism of the central stalk subunits to proton translocation. In terms of biological role, this protein is part of the stalk that links CF(0) to CF(1). It either transmits conformational changes from CF(0) to CF(1) or is implicated in proton conduction. The polypeptide is ATP synthase subunit delta (Ruminiclostridium cellulolyticum (strain ATCC 35319 / DSM 5812 / JCM 6584 / H10) (Clostridium cellulolyticum)).